An 887-amino-acid chain; its full sequence is Leucine--tRNA ligase (887 aa).

The short motif at 48–58 is the 'HIGH' region element; it reads PYPSGKLHMGH. The 'KMSKS' region signature appears at 644-648; sequence TMSKS. Lys-647 serves as a coordination point for ATP.

The protein belongs to the class-I aminoacyl-tRNA synthetase family.

The protein resides in the cytoplasm. The catalysed reaction is tRNA(Leu) + L-leucine + ATP = L-leucyl-tRNA(Leu) + AMP + diphosphate. The sequence is that of Leucine--tRNA ligase from Leptothrix cholodnii (strain ATCC 51168 / LMG 8142 / SP-6) (Leptothrix discophora (strain SP-6)).